Consider the following 231-residue polypeptide: Probable septum site-determining protein MinC (231 aa).

The interval 102–125 (KEKAPRPAPAPQAPAQNTTPVTKT) is disordered.

This sequence belongs to the MinC family. As to quaternary structure, interacts with MinD and FtsZ.

In terms of biological role, cell division inhibitor that blocks the formation of polar Z ring septums. Rapidly oscillates between the poles of the cell to destabilize FtsZ filaments that have formed before they mature into polar Z rings. Prevents FtsZ polymerization. The polypeptide is Probable septum site-determining protein MinC (Escherichia coli O6:K15:H31 (strain 536 / UPEC)).